Consider the following 217-residue polypeptide: Probable coenzyme A transferase subunit beta (217 aa).

Residue E50 is part of the active site.

The protein belongs to the 3-oxoacid CoA-transferase subunit B family. As to quaternary structure, heterodimer of a subunit alpha and a subunit beta.

This is Probable coenzyme A transferase subunit beta (yodR) from Bacillus subtilis (strain 168).